We begin with the raw amino-acid sequence, 167 residues long: Brain ribonuclease (167 aa).

The signal sequence occupies residues 1–26 (MALKSLVLLSLLVLVLLLVQVQPSLG). Residues Lys33 and Arg36 each coordinate substrate. His38 functions as the Proton acceptor in the catalytic mechanism. Cystine bridges form between Cys52/Cys110, Cys66/Cys121, Cys84/Cys136, and Cys91/Cys98. 67 to 71 (KPVNT) serves as a coordination point for substrate. A glycan (N-linked (GlcNAc...) asparagine) is linked at Asn88. Substrate contacts are provided by Lys92 and Arg111. The active-site Proton donor is His145. Thr155 is a glycosylation site (O-linked (GalNAc...) threonine). Residue Ser159 is glycosylated (O-linked (GalNAc...) serine).

This sequence belongs to the pancreatic ribonuclease family.

The protein localises to the secreted. This is Brain ribonuclease (BRN) from Bos taurus (Bovine).